The sequence spans 176 residues: Large ribosomal subunit protein uL6 (176 aa).

Residues 151–170 (RPPEPYKGKGVRYADEQVRR) show a composition bias toward basic and acidic residues. The disordered stretch occupies residues 151–176 (RPPEPYKGKGVRYADEQVRRKEAKKK).

It belongs to the universal ribosomal protein uL6 family. Part of the 50S ribosomal subunit.

This protein binds to the 23S rRNA, and is important in its secondary structure. It is located near the subunit interface in the base of the L7/L12 stalk, and near the tRNA binding site of the peptidyltransferase center. This is Large ribosomal subunit protein uL6 from Shewanella piezotolerans (strain WP3 / JCM 13877).